Here is a 148-residue protein sequence, read N- to C-terminus: Putative lysozyme C-2 (148 aa).

The signal sequence occupies residues 1–18 (MKALLVLGFLLLSASVQA). Positions 19–148 (KVFKHCELAR…LSGYIRNCGV (130 aa)) constitute a C-type lysozyme domain. Intrachain disulfides connect C24–C146, C48–C134, C83–C99, and C95–C113. Catalysis depends on residues E53 and D71.

Belongs to the glycosyl hydrolase 22 family. As to quaternary structure, monomer.

The protein resides in the secreted. It catalyses the reaction Hydrolysis of (1-&gt;4)-beta-linkages between N-acetylmuramic acid and N-acetyl-D-glucosamine residues in a peptidoglycan and between N-acetyl-D-glucosamine residues in chitodextrins.. Lysozymes have primarily a bacteriolytic function; those in tissues and body fluids are associated with the monocyte-macrophage system and enhance the activity of immunoagents. In the intestine they may also have a digestive function. The sequence is that of Putative lysozyme C-2 (Lyz2) from Rattus norvegicus (Rat).